Here is a 198-residue protein sequence, read N- to C-terminus: Endothelin-3 (198 aa).

Residues 1 to 16 (MEPGLWLLFGLTVTSA) form the signal peptide. Residues 17–86 (AGLVPCPQPG…SKGGPVHGRA (70 aa)) constitute a propeptide that is removed on maturation. Residues 22-79 (CPQPGDAGKSGVPGTPPTARSEGDIQEPVAMTAVQGPSPRSPEQEQELGRFGEQASKG) are disordered. 2 disulfide bridges follow: cysteine 89-cysteine 103 and cysteine 91-cysteine 99. Residues 110 to 198 (INTPEQTVPY…RGNGGLRPTR (89 aa)) constitute a propeptide that is removed on maturation. The tract at residues 150–164 (CACVQSQDSACLHFC) is endothelin-like. The interval 174–198 (SRTATNPDKEEEPASRGNGGLRPTR) is disordered.

This sequence belongs to the endothelin/sarafotoxin family. As to expression, expressed in which included heart, lung, liver, kidney, spleen, stomach, pancreas, duodenum, colon, uterus, ovary and testis.

The protein resides in the secreted. Functionally, endothelins are endothelium-derived vasoconstrictor peptides. The chain is Endothelin-3 (EDN3) from Canis lupus familiaris (Dog).